Consider the following 86-residue polypeptide: Putative defensin-like protein 234 (86 aa).

Residues 1–26 (MRSATLLLVSCVLLSFILGNVKEVEA) form the signal peptide. Intrachain disulfides connect Cys34-Cys86, Cys44-Cys71, Cys52-Cys80, and Cys69-Cys82.

This sequence belongs to the DEFL family.

The protein resides in the secreted. The protein is Putative defensin-like protein 234 (SCRL14) of Arabidopsis thaliana (Mouse-ear cress).